The following is a 632-amino-acid chain: PTS system mannitol-specific EIICBA component (632 aa).

The PTS EIIC type-2 domain occupies 12-341 (FGRFLSNMIM…ILLKYDFNTI (330 aa)). A run of 6 helical transmembrane segments spans residues 24–45 (ISIF…WQPN), 50–70 (QLIS…TGGS), 134–155 (SLAI…PFIE), 165–185 (IQII…EPAK), 273–292 (LILG…GGLI), and 313–334 (FSNI…SILL). One can recognise a PTS EIIB type-2 domain in the interval 374 to 469 (KTIIVACDAG…KLVENMVFLY (96 aa)). Catalysis depends on Cys380, which acts as the Phosphocysteine intermediate; for EIIB activity. Cys380 carries the post-translational modification Phosphocysteine; by EIIA. Residues 488–630 (FQLNEENIIL…KEALSLLTME (143 aa)) enclose the PTS EIIA type-2 domain. The active-site Tele-phosphohistidine intermediate; for EIIA activity is His548. At His548 the chain carries Phosphohistidine; by HPr.

As to quaternary structure, homodimer. In terms of processing, an intramolecular phosphotransfer takes places between His-548 and Cys-380.

Its subcellular location is the cell inner membrane. The catalysed reaction is D-mannitol(out) + N(pros)-phospho-L-histidyl-[protein] = D-mannitol 1-phosphate(in) + L-histidyl-[protein]. Functionally, the phosphoenolpyruvate-dependent sugar phosphotransferase system (sugar PTS), a major carbohydrate active transport system, catalyzes the phosphorylation of incoming sugar substrates concomitantly with their translocation across the cell membrane. This system is involved in D-mannitol transport. The sequence is that of PTS system mannitol-specific EIICBA component (mtlA) from Buchnera aphidicola subsp. Acyrthosiphon pisum (strain APS) (Acyrthosiphon pisum symbiotic bacterium).